Here is a 754-residue protein sequence, read N- to C-terminus: Peptidyl-prolyl cis-trans isomerase G (754 aa).

Positions 11-176 constitute a PPIase cyclophilin-type domain; that stretch reads FFDIAINNQP…AEVRILSCGE (166 aa). The span at 182-193 shows a compositional bias: basic residues; sequence KVKKEEKKRHKS. Residues 182–754 form a disordered region; the sequence is KVKKEEKKRH…SPGTDEDKSG (573 aa). A compositionally biased stretch (low complexity) spans 194–216; sequence SSSSSSSSSDSDSSSDSQSSSDS. A compositionally biased stretch (basic residues) spans 228–253; it reads KKRKKKHRKNSRKHKKEKKKRKKSKK. Phosphoserine is present on residues Ser254, Ser256, Ser257, Ser259, and Ser290. Residues 292–310 are compositionally biased toward basic and acidic residues; it reads PKADEKERKNREREREREC. Residue Ser315 is modified to Phosphoserine. Over residues 329 to 347 the composition is skewed to basic residues; the sequence is SGRKIKGRGPRRYRTPSRS. Basic and acidic residues-rich tracts occupy residues 348 to 368 and 379 to 449; these read RSRD…EMQR and RWIK…DKYK. A Phosphoserine modification is found at Ser356. Thr358 is modified (phosphothreonine). Ser386 is subject to Phosphoserine. Lys392 participates in a covalent cross-link: Glycyl lysine isopeptide (Lys-Gly) (interchain with G-Cter in SUMO2). A phosphoserine mark is found at Ser397, Ser413, and Ser415. A compositionally biased stretch (basic residues) spans 450 to 462; that stretch reads NKVKKRAKSKSRS. Basic and acidic residues-rich tracts occupy residues 463–553 and 578–599; these read KSKE…DITK and RTHD…QEYR. Residues 616–627 show a composition bias toward basic residues; it reads SRSKDRRRRRRD. A compositionally biased stretch (basic and acidic residues) spans 628-686; sequence SRSSEREESQSRNKDKYRNQESKSSHRKENSESEKRMYSKSRDHNSSNNSREKKADRDQ. A phosphoserine mark is found at Ser687 and Ser690. The segment covering 687 to 698 has biased composition (polar residues); sequence SPFSKIKQSSQD. Lys693 participates in a covalent cross-link: Glycyl lysine isopeptide (Lys-Gly) (interchain with G-Cter in SUMO2). 3 positions are modified to phosphoserine: Ser696, Ser744, and Ser745. A compositionally biased stretch (basic and acidic residues) spans 707 to 754; it reads KNKEDEKIRSSVEKENQKSKGQENDHVHEKNKKFDHESSPGTDEDKSG. Thr748 carries the phosphothreonine modification. Residue Ser753 is modified to Phosphoserine.

As to quaternary structure, interacts with CLK1, PNN and with the phosphorylated C-terminal domain of RNA polymerase II. Ubiquitous.

The protein resides in the nucleus matrix. It localises to the nucleus speckle. It catalyses the reaction [protein]-peptidylproline (omega=180) = [protein]-peptidylproline (omega=0). Inhibited by cyclosporin A (CsA). Functionally, PPIase that catalyzes the cis-trans isomerization of proline imidic peptide bonds in oligopeptides and may therefore assist protein folding. May be implicated in the folding, transport, and assembly of proteins. May play an important role in the regulation of pre-mRNA splicing. In Homo sapiens (Human), this protein is Peptidyl-prolyl cis-trans isomerase G (PPIG).